Consider the following 1342-residue polypeptide: DNA-directed RNA polymerase subunit beta (1342 aa).

N6-acetyllysine is present on residues K1022 and K1200.

This sequence belongs to the RNA polymerase beta chain family. The RNAP catalytic core consists of 2 alpha, 1 beta, 1 beta' and 1 omega subunit. When a sigma factor is associated with the core the holoenzyme is formed, which can initiate transcription.

The enzyme catalyses RNA(n) + a ribonucleoside 5'-triphosphate = RNA(n+1) + diphosphate. In terms of biological role, DNA-dependent RNA polymerase catalyzes the transcription of DNA into RNA using the four ribonucleoside triphosphates as substrates. In Escherichia coli O81 (strain ED1a), this protein is DNA-directed RNA polymerase subunit beta.